Consider the following 574-residue polypeptide: MAATAIEPSSSISFTSSHLSNPSPVVTTYHSAANLEELSSNLEQLLTNPDCDYTDAEIIIEEEANPVSVHRCVLAARSKFFLDLFKKDKDSSEKKPKYQMKDLLPYGNVGREAFLHFLSYIYTGRLKPFPIEVSTCVDSVCAHDSCKPAIDFAVELMYASFVFQIPDLVSSFQRKLRNYVEKSLVENVLPILLVAFHCDLTQLLDQCIERVARSDLDRFCIEKELPLEVLEKIKQLRVKSVNIPEVEDKSIERTGKVLKALDSDDVELVKLLLTESDITLDQANGLHYAVAYSDPKVVTQVLDLDMADVNFRNSRGYTVLHIAAMRREPTIIIPLIQKGANASDFTFDGRSAVNICRRLTRPKDYHTKTSRKEPSKYRLCIDILEREIRRNPLVSGDTPTCSHSMPEDLQMRLLYLEKRVGLAQLFFPAEANVAMDVANVEGTSECTGLLTPPPSNDTTENLGKVDLNETPYVQTKRMLTRMKALMKTVETGRRYFPSCYEVLDKYMDQYMDEEIPDMSYPEKGTVKERRQKRMRYNELKNDVKKAYSKDKVARSCLSSSSPASSLREALENPT.

The disordered stretch occupies residues 1-21 (MAATAIEPSSSISFTSSHLSN). Residues 9–20 (SSSISFTSSHLS) show a composition bias toward low complexity. Ser-11 carries the post-translational modification Phosphoserine. A BTB domain is found at 54–130 (TDAEIIIEEE…IYTGRLKPFP (77 aa)). Residues 133-147 (VSTCVDSVCAHDSCK) form a C2HC NPR-type zinc finger. The Zn(2+) site is built by Cys-136, Cys-141, His-143, and Cys-146. ANK repeat units lie at residues 252-280 (ERTG…DITL), 281-311 (DQAN…DVNF), and 315-344 (RGYT…NASD). The segment at 373–516 (EPSKYRLCID…MDQYMDEEIP (144 aa)) is salicylic acid-binding core (SBC). Arg-419 serves as a coordination point for salicylate. Residues 521–574 (PEKGTVKERRQKRMRYNELKNDVKKAYSKDKVARSCLSSSSPASSLREALENPT) form a disordered region. The segment covering 535-553 (RYNELKNDVKKAYSKDKVA) has biased composition (basic and acidic residues). Residues 554–567 (RSCLSSSSPASSLR) show a composition bias toward low complexity.

The protein belongs to the plant 'ANKYRIN-BTB/POZ' family. 'NPR1-like' subfamily. As to quaternary structure, forms homodimers, homotetramers and heterodimers with NPR3 in the presence of salicylic acid (SA). Interacts with TGA2, TGA3, TGA5, TGA6 and TGA7. Interacts with CUL3A, a core component of the cullin-RING ubiquitin ligases (CRL). Binds to NPR1; this interaction is disrupted by association with SA, probably due to conformational changes.

It is found in the nucleus. It participates in protein modification; protein ubiquitination. Salicylic acid (SA)-binding substrate-specific adapter of an E3 ubiquitin-protein ligase complex (CUL3-RBX1-BTB) which mediates the ubiquitination and subsequent proteasomal degradation of NPR1 in the absence of SA. Together with NPR3, acts as receptor of salicylic acid to monitor immunity in a NPR1-dependent manner and induce systemic acquired resistance (SAR). Involved in the regulation of basal defense responses against pathogens, and may be implicated in the cross-talk between the SA- and JA-dependent signaling pathways. The protein is Regulatory protein NPR4 of Arabidopsis thaliana (Mouse-ear cress).